A 697-amino-acid polypeptide reads, in one-letter code: Gametogenetin-binding protein 2 (697 aa).

Ser-360 bears the Phosphoserine mark.

Interacts with GGN. Expressed in heart, brain, placenta, lung, liver, skeletal muscle, kidney and pancreas. Expressed more abundantly in heart, pancreas and skeletal muscle.

Its subcellular location is the cytoplasmic vesicle. Its function is as follows. May be involved in spermatogenesis. The chain is Gametogenetin-binding protein 2 (GGNBP2) from Homo sapiens (Human).